Reading from the N-terminus, the 314-residue chain is Acetyl-coenzyme A carboxylase carboxyl transferase subunit alpha (314 aa).

Residues 32–289 (EIDMLEASLE…KSAFVAQLDS (258 aa)) enclose the CoA carboxyltransferase C-terminal domain.

Belongs to the AccA family. In terms of assembly, acetyl-CoA carboxylase is a heterohexamer composed of biotin carboxyl carrier protein (AccB), biotin carboxylase (AccC) and two subunits each of ACCase subunit alpha (AccA) and ACCase subunit beta (AccD).

It localises to the cytoplasm. It catalyses the reaction N(6)-carboxybiotinyl-L-lysyl-[protein] + acetyl-CoA = N(6)-biotinyl-L-lysyl-[protein] + malonyl-CoA. It functions in the pathway lipid metabolism; malonyl-CoA biosynthesis; malonyl-CoA from acetyl-CoA: step 1/1. Component of the acetyl coenzyme A carboxylase (ACC) complex. First, biotin carboxylase catalyzes the carboxylation of biotin on its carrier protein (BCCP) and then the CO(2) group is transferred by the carboxyltransferase to acetyl-CoA to form malonyl-CoA. In Staphylococcus aureus (strain NCTC 8325 / PS 47), this protein is Acetyl-coenzyme A carboxylase carboxyl transferase subunit alpha.